The primary structure comprises 512 residues: Allene oxide synthase 1, chloroplastic (512 aa).

A chloroplast-targeting transit peptide spans 1–25 (MATAAACISFASPSPARVVIRRQTR). The tract at residues 23 to 43 (QTRASASASATDRQEVVSPKR) is disordered. Heme b contacts are provided by lysine 127, histidine 158, and lysine 162. Residue asparagine 315 participates in (13S)-hydroperoxy-(9Z,11E,15Z)-octadecatrienoate binding. The heme b site is built by lysine 463 and cysteine 465.

This sequence belongs to the cytochrome P450 family. Heme b is required as a cofactor. As to expression, expressed in coleoptiles, and at lower level in leaves of dark-grown seedlings.

The protein localises to the plastid. It localises to the chloroplast membrane. It catalyses the reaction (13S)-hydroperoxy-(9Z,11E,15Z)-octadecatrienoate = (9Z,13S,15Z)-12,13-epoxyoctadeca-9,11,15-trienoate + H2O. The protein operates within lipid metabolism; oxylipin biosynthesis. Its function is as follows. Involved in the biosynthesis of jasmonic acid, a growth regulator that is implicated also as a signaling molecule in plant defense. Converts 13-hydroperoxylinolenic acid to 12,13-epoxylinolenic acid. This is Allene oxide synthase 1, chloroplastic (CYP74A1) from Oryza sativa subsp. japonica (Rice).